The sequence spans 202 residues: Nascent polypeptide-associated complex subunit alpha (202 aa).

The segment covering 1–19 has biased composition (basic and acidic residues); that stretch reads MADPRVEELPDEEVPKTNV. Residues 1–42 are disordered; the sequence is MADPRVEELPDEEVPKTNVEDAGSSSESEAGDEPTIPGGAAV. In terms of domain architecture, NAC-A/B spans 46–111; that stretch reads SRNEKKARKA…AKIEDLNATA (66 aa). The span at 117 to 126 shows a compositional bias: low complexity; it reads QQLAEAAANE. Positions 117-165 are disordered; the sequence is QQLAEAAANEHAGHDHEHDHGKGKAPEAEAKKEEEEDDGEEVDESGLEA. Residues 127–149 show a composition bias toward basic and acidic residues; that stretch reads HAGHDHEHDHGKGKAPEAEAKKE. Residues 150-162 show a composition bias toward acidic residues; that stretch reads EEEDDGEEVDESG. The UBA domain occupies 163–202; that stretch reads LEAKDIELVMAQANVSRKKAVKALRENDNDIVNSIMALSI.

This sequence belongs to the NAC-alpha family. Part of the nascent polypeptide-associated complex (NAC), consisting of egd2 and egd1. NAC associates with ribosomes via egd1.

It localises to the cytoplasm. It is found in the nucleus. Component of the nascent polypeptide-associated complex (NAC), a dynamic component of the ribosomal exit tunnel, protecting the emerging polypeptides from interaction with other cytoplasmic proteins to ensure appropriate nascent protein targeting. The NAC complex also promotes mitochondrial protein import by enhancing productive ribosome interactions with the outer mitochondrial membrane and blocks the inappropriate interaction of ribosomes translating non-secretory nascent polypeptides with translocation sites in the membrane of the endoplasmic reticulum. Egd2 may also be involved in transcription regulation. In Aspergillus niger (strain ATCC MYA-4892 / CBS 513.88 / FGSC A1513), this protein is Nascent polypeptide-associated complex subunit alpha (egd2).